A 369-amino-acid chain; its full sequence is Virulence factor-related M protein (369 aa).

The signal sequence occupies residues 1–41 (MARQQTKKNYSLRKLKTGTASVAVALTVLGAGFANQTEVRA). C repeat units follow at residues 120 to 154 (AKATKENEISEASRKGLSRDLEASRAAKKELEAKH), 162 to 196 (KKLTEANQVSEASRKGLSNDLEASRAAKKELEAKY), and 211 to 246 (QKLEADLPKFQRPSRKGLSRDLEASREANKKVTSEL). Composition is skewed to basic and acidic residues over residues 125 to 165 (ENEI…KKLT), 202 to 219 (DHQALEAKHQKLEADLPK), 228 to 243 (LSRDLEASREANKKVT), and 257 to 271 (EESKKLSEKEKAELQ). Disordered stretches follow at residues 125–189 (ENEI…RAAK) and 202–271 (DHQA…AELQ). A 2 X repeats, type A region spans residues 129–200 (SEASRKGLSR…ELEAKYQKLE (72 aa)). The segment at 132–241 (SRKGLSRDLE…LEASREANKK (110 aa)) is 3 X repeats, type B. D repeat units lie at residues 272–277 (AKLDAQ), 278–283 (GKALKE), 286–291 (AKQTEE), and 293–298 (AKLRAE). Basic and acidic residues predominate over residues 292-301 (LAKLRAEKAA). Residues 292–341 (LAKLRAEKAAGSKTPATKPANKERSGRAAQTATRPSQNKGMRSQLPSTGE) are disordered. Residues 319 to 338 (AAQTATRPSQNKGMRSQLPS) are compositionally biased toward polar residues. The LPXTG sorting signal motif lies at 336–340 (LPSTG). Pentaglycyl murein peptidoglycan amidated threonine is present on Thr339. Positions 340–369 (GEAANPFFTAAAATVMVSAGMLALKRKEEN) are cleaved as a propeptide — removed by sortase.

The protein belongs to the M protein family.

The protein localises to the secreted. It localises to the cell wall. The protein is Virulence factor-related M protein (ennX) of Streptococcus pyogenes serotype M49.